The primary structure comprises 342 residues: 4-hydroxythreonine-4-phosphate dehydrogenase (342 aa).

Positions 140 and 141 each coordinate substrate. 3 residues coordinate a divalent metal cation: His175, His220, and His275. Substrate-binding residues include Lys283, Asn292, and Arg301.

It belongs to the PdxA family. As to quaternary structure, homodimer. The cofactor is Zn(2+). Mg(2+) is required as a cofactor. Requires Co(2+) as cofactor.

It is found in the cytoplasm. It carries out the reaction 4-(phosphooxy)-L-threonine + NAD(+) = 3-amino-2-oxopropyl phosphate + CO2 + NADH. It participates in cofactor biosynthesis; pyridoxine 5'-phosphate biosynthesis; pyridoxine 5'-phosphate from D-erythrose 4-phosphate: step 4/5. Its function is as follows. Catalyzes the NAD(P)-dependent oxidation of 4-(phosphooxy)-L-threonine (HTP) into 2-amino-3-oxo-4-(phosphooxy)butyric acid which spontaneously decarboxylates to form 3-amino-2-oxopropyl phosphate (AHAP). This chain is 4-hydroxythreonine-4-phosphate dehydrogenase, found in Rhizobium meliloti (strain 1021) (Ensifer meliloti).